The sequence spans 262 residues: Pyridoxine 5'-phosphate synthase (262 aa).

Asn-6 contacts 3-amino-2-oxopropyl phosphate. 1-deoxy-D-xylulose 5-phosphate is bound at residue 8 to 9; it reads DH. Residue Arg-17 participates in 3-amino-2-oxopropyl phosphate binding. His-41 acts as the Proton acceptor in catalysis. Residues Arg-43 and His-48 each coordinate 1-deoxy-D-xylulose 5-phosphate. The active-site Proton acceptor is the Glu-68. Thr-98 serves as a coordination point for 1-deoxy-D-xylulose 5-phosphate. His-210 (proton donor) is an active-site residue. Residues Gly-211 and 232-233 contribute to the 3-amino-2-oxopropyl phosphate site; that span reads GQ.

The protein belongs to the PNP synthase family. In terms of assembly, homooctamer; tetramer of dimers.

Its subcellular location is the cytoplasm. The catalysed reaction is 3-amino-2-oxopropyl phosphate + 1-deoxy-D-xylulose 5-phosphate = pyridoxine 5'-phosphate + phosphate + 2 H2O + H(+). Its pathway is cofactor biosynthesis; pyridoxine 5'-phosphate biosynthesis; pyridoxine 5'-phosphate from D-erythrose 4-phosphate: step 5/5. Functionally, catalyzes the complicated ring closure reaction between the two acyclic compounds 1-deoxy-D-xylulose-5-phosphate (DXP) and 3-amino-2-oxopropyl phosphate (1-amino-acetone-3-phosphate or AAP) to form pyridoxine 5'-phosphate (PNP) and inorganic phosphate. The protein is Pyridoxine 5'-phosphate synthase of Campylobacter jejuni subsp. jejuni serotype O:23/36 (strain 81-176).